Reading from the N-terminus, the 462-residue chain is GTPase Der (462 aa).

2 consecutive EngA-type G domains span residues 9–171 (KTIA…NLNQ) and 201–372 (IQVG…ECFS). Residues 15–22 (GQPNVGKS), 62–66 (DTGGM), 123–126 (NKID), 207–214 (GRVNVGKS), 254–258 (DTAGI), and 318–321 (NKWD) contribute to the GTP site. The region spanning 373-457 (KRIPTSLLNS…PLILNAKDKK (85 aa)) is the KH-like domain.

Belongs to the TRAFAC class TrmE-Era-EngA-EngB-Septin-like GTPase superfamily. EngA (Der) GTPase family. In terms of assembly, associates with the 50S ribosomal subunit.

In terms of biological role, GTPase that plays an essential role in the late steps of ribosome biogenesis. This is GTPase Der from Helicobacter pylori (strain P12).